The following is a 553-amino-acid chain: Chaperonin GroEL 2 (553 aa).

ATP is bound by residues 29-32 (TLGP), 86-90 (DGTTT), G414, and D495.

This sequence belongs to the chaperonin (HSP60) family. Forms a cylinder of 14 subunits composed of two heptameric rings stacked back-to-back. Interacts with the co-chaperonin GroES.

The protein resides in the cytoplasm. It catalyses the reaction ATP + H2O + a folded polypeptide = ADP + phosphate + an unfolded polypeptide.. Together with its co-chaperonin GroES, plays an essential role in assisting protein folding. The GroEL-GroES system forms a nano-cage that allows encapsulation of the non-native substrate proteins and provides a physical environment optimized to promote and accelerate protein folding. In Gloeobacter violaceus (strain ATCC 29082 / PCC 7421), this protein is Chaperonin GroEL 2.